A 180-amino-acid chain; its full sequence is Putative adenylate kinase (180 aa).

Residues G10, G12, K13, T14, and T15 each coordinate ATP. Residues 30–50 form an NMP region; that stretch reads NLRDFALEKGCGREVDGEVEV. Residues 99–109 are LID; the sequence is ERGYSKEKIGE. Residues R100 and K138 each coordinate ATP.

The protein belongs to the adenylate kinase family. AK6 subfamily. Interacts with uS11. Not a structural component of 40S pre-ribosomes, but transiently interacts with them by binding to uS11.

The enzyme catalyses AMP + ATP = 2 ADP. The catalysed reaction is ATP + H2O = ADP + phosphate + H(+). Its function is as follows. Broad-specificity nucleoside monophosphate (NMP) kinase that catalyzes the reversible transfer of the terminal phosphate group between nucleoside triphosphates and monophosphates. Also has ATPase activity. Involved in the late maturation steps of the 30S ribosomal particles, specifically 16S rRNA maturation. While NMP activity is not required for ribosome maturation, ATPase activity is. Associates transiently with small ribosomal subunit protein uS11. ATP hydrolysis breaks the interaction with uS11. May temporarily remove uS11 from the ribosome to enable a conformational change of the ribosomal RNA that is needed for the final maturation step of the small ribosomal subunit. The chain is Putative adenylate kinase from Pyrococcus abyssi (strain GE5 / Orsay).